The sequence spans 471 residues: Tyrosine--tRNA ligase (471 aa).

Residue Tyr-41 coordinates L-tyrosine. Positions 46 to 55 (PTAPSLHVGN) match the 'HIGH' region motif. L-tyrosine contacts are provided by Tyr-176 and Gln-180. Residues 236–240 (KFGKT) carry the 'KMSKS' region motif. Lys-239 lines the ATP pocket. The S4 RNA-binding domain maps to 403-471 (DLITHILQKV…GKKHLAAVFY (69 aa)).

The protein belongs to the class-I aminoacyl-tRNA synthetase family. TyrS type 1 subfamily. As to quaternary structure, homodimer.

Its subcellular location is the cytoplasm. It catalyses the reaction tRNA(Tyr) + L-tyrosine + ATP = L-tyrosyl-tRNA(Tyr) + AMP + diphosphate + H(+). Its function is as follows. Catalyzes the attachment of tyrosine to tRNA(Tyr) in a two-step reaction: tyrosine is first activated by ATP to form Tyr-AMP and then transferred to the acceptor end of tRNA(Tyr). The chain is Tyrosine--tRNA ligase from Tropheryma whipplei (strain Twist) (Whipple's bacillus).